The sequence spans 562 residues: Acetolactate synthase isozyme 1 large subunit (562 aa).

E60 provides a ligand contact to thiamine diphosphate. Residues R162, 264-285 (HGVR…LGAR), and 307-326 (DIDR…IQAD) each bind FAD. Positions 393–473 (QHQMWTAQAY…VKIILMNNEA (81 aa)) are thiamine pyrophosphate binding. The Mg(2+) site is built by D444 and N471.

It belongs to the TPP enzyme family. Dimer of large and small chains. It depends on Mg(2+) as a cofactor. Thiamine diphosphate serves as cofactor.

The catalysed reaction is 2 pyruvate + H(+) = (2S)-2-acetolactate + CO2. It participates in amino-acid biosynthesis; L-isoleucine biosynthesis; L-isoleucine from 2-oxobutanoate: step 1/4. It functions in the pathway amino-acid biosynthesis; L-valine biosynthesis; L-valine from pyruvate: step 1/4. This is Acetolactate synthase isozyme 1 large subunit (ilvB) from Escherichia coli (strain K12).